Consider the following 407-residue polypeptide: Lysosome-associated membrane glycoprotein 1 (407 aa).

An N-terminal signal peptide occupies residues M1–G21. The first lumenal domain stretch occupies residues A22 to D189. Over A22–N371 the chain is Lumenal. N-linked (GlcNAc...) asparagine glycosylation is found at N32, N40, N57, N72, N79, N98, N102, N116, N125, N145, N160, and N178. A disulfide bridge connects residues C36 and C75. A disulfide bond links C150 and C186. The disordered stretch occupies residues E183–P206. Positions G190–E219 are hinge. Pro residues predominate over residues T194 to P206. Residues N215, N220, N233, N241, N253, N283, N297, N304, and N312 are each glycosylated (N-linked (GlcNAc...) asparagine). Residues N220–N371 are second lumenal domain. C223 and C260 are joined by a disulfide. A disulfide bond links C328 and C365. A helical transmembrane segment spans residues M372–I395. Topologically, residues G396–I407 are cytoplasmic.

It belongs to the LAMP family. As to quaternary structure, interacts with ABCB9; this interaction strongly stabilizes ABCB9 and protects ABCB9 against lysosomal degradation. Interacts with FURIN. Interacts with TMEM175; inhibiting the proton channel activity of TMEM175. In terms of processing, O- and N-glycosylated; some of the N-glycans attached to LAMP-1 are polylactosaminoglycans.

It localises to the lysosome membrane. Its subcellular location is the endosome membrane. The protein localises to the late endosome membrane. It is found in the cell membrane. The protein resides in the cytolytic granule membrane. Its function is as follows. Lysosomal membrane glycoprotein which plays an important role in lysosome biogenesis, lysosomal pH regulation, autophagy and cholesterol homeostasis. Acts as an important regulator of lysosomal lumen pH regulation by acting as a direct inhibitor of the proton channel TMEM175, facilitating lysosomal acidification for optimal hydrolase activity. Also plays an important role in NK-cells cytotoxicity. Mechanistically, participates in cytotoxic granule movement to the cell surface and perforin trafficking to the lytic granule. In addition, protects NK-cells from degranulation-associated damage induced by their own cytotoxic granule content. Presents carbohydrate ligands to selectins. This is Lysosome-associated membrane glycoprotein 1 (LAMP1) from Cricetulus griseus (Chinese hamster).